The sequence spans 93 residues: Red pigment-concentrating hormone (93 aa).

The signal sequence occupies residues 1–21 (MVRAVVATLLVVLVVASCVSA). Pyrrolidone carboxylic acid is present on Gln22. Residue Trp29 is modified to Tryptophan amide. Residues 33-93 (AAAGGEGTGM…VQCQDEEYLG (61 aa)) constitute a propeptide that is removed on maturation. A disordered region spans residues 34–56 (AAGGEGTGMHPPAGAVVPPPSSL).

Belongs to the AKH/HRTH/RPCH family. In terms of tissue distribution, strongly expressed in the eyestalk and weakly in brain. Not expressed in other tissues tested.

It is found in the secreted. Its function is as follows. This hormone adapts the animal to light backgrounds by stimulating concentration of the pigment of its red body-chromatophores. The protein is Red pigment-concentrating hormone of Penaeus monodon (Giant tiger prawn).